A 450-amino-acid polypeptide reads, in one-letter code: Probable 1,4-beta-D-glucan cellobiohydrolase C (450 aa).

The first 19 residues, 1–19, serve as a signal peptide directing secretion; sequence MKHLASSIALTLLLPAVQA. The 36-residue stretch at 20–55 folds into the CBM1 domain; it reads QQTVWGQCGGQGWSGPTNCVAGAACSTLNPYYAQCI. 2 cysteine pairs are disulfide-bonded: Cys27-Cys44 and Cys38-Cys54. The tract at residues 59 to 90 is thr-rich linker; that stretch reads TATSTTLSTTTTTQTTTKPTTTGPTTSAPTVT. The interval 63 to 89 is disordered; that stretch reads TTLSTTTTTQTTTKPTTTGPTTSAPTV. The interval 91–450 is catalytic; that stretch reads ASGNPFSGYQ…QLLTNANPSF (360 aa). Asp180 is an active-site residue. 2 cysteine pairs are disulfide-bonded: Cys181–Cys240 and Cys372–Cys419. Asp226 (proton donor) is an active-site residue. Asp405 functions as the Nucleophile in the catalytic mechanism. N-linked (GlcNAc...) asparagine glycosylation is present at Asn409.

The protein belongs to the glycosyl hydrolase 6 (cellulase B) family.

The protein resides in the secreted. The catalysed reaction is Hydrolysis of (1-&gt;4)-beta-D-glucosidic linkages in cellulose and cellotetraose, releasing cellobiose from the non-reducing ends of the chains.. Functionally, the biological conversion of cellulose to glucose generally requires three types of hydrolytic enzymes: (1) Endoglucanases which cut internal beta-1,4-glucosidic bonds; (2) Exocellobiohydrolases that cut the disaccharide cellobiose from the non-reducing end of the cellulose polymer chain; (3) Beta-1,4-glucosidases which hydrolyze the cellobiose and other short cello-oligosaccharides to glucose. This is Probable 1,4-beta-D-glucan cellobiohydrolase C (cbhC) from Neosartorya fischeri (strain ATCC 1020 / DSM 3700 / CBS 544.65 / FGSC A1164 / JCM 1740 / NRRL 181 / WB 181) (Aspergillus fischerianus).